The sequence spans 502 residues: ATP synthase subunit alpha (502 aa).

An ATP-binding site is contributed by G169–T176.

The protein belongs to the ATPase alpha/beta chains family. As to quaternary structure, F-type ATPases have 2 components, CF(1) - the catalytic core - and CF(0) - the membrane proton channel. CF(1) has five subunits: alpha(3), beta(3), gamma(1), delta(1), epsilon(1). CF(0) has three main subunits: a(1), b(2) and c(9-12). The alpha and beta chains form an alternating ring which encloses part of the gamma chain. CF(1) is attached to CF(0) by a central stalk formed by the gamma and epsilon chains, while a peripheral stalk is formed by the delta and b chains.

It is found in the cell membrane. It carries out the reaction ATP + H2O + 4 H(+)(in) = ADP + phosphate + 5 H(+)(out). Produces ATP from ADP in the presence of a proton gradient across the membrane. The alpha chain is a regulatory subunit. This chain is ATP synthase subunit alpha, found in Bacillus velezensis (strain DSM 23117 / BGSC 10A6 / LMG 26770 / FZB42) (Bacillus amyloliquefaciens subsp. plantarum).